The chain runs to 264 residues: Small ribosomal subunit protein eS1 (264 aa).

Residues 232–264 (HGEGGGAGKPSGDEAGTKVERADGYEPPVQESV) form a disordered region. The segment covering 242–255 (SGDEAGTKVERADG) has biased composition (basic and acidic residues).

It belongs to the eukaryotic ribosomal protein eS1 family. As to quaternary structure, component of the small ribosomal subunit. Mature ribosomes consist of a small (40S) and a large (60S) subunit. The 40S subunit contains about 33 different proteins and 1 molecule of RNA (18S). The 60S subunit contains about 49 different proteins and 3 molecules of RNA (28S, 5.8S and 5S). Part of the small subunit (SSU) processome, composed of more than 70 proteins and the RNA chaperone small nucleolar RNA (snoRNA) U3.

It localises to the cytoplasm. The protein resides in the nucleus. It is found in the nucleolus. Component of the small ribosomal subunit. The ribosome is a large ribonucleoprotein complex responsible for the synthesis of proteins in the cell. Part of the small subunit (SSU) processome, first precursor of the small eukaryotic ribosomal subunit. During the assembly of the SSU processome in the nucleolus, many ribosome biogenesis factors, an RNA chaperone and ribosomal proteins associate with the nascent pre-rRNA and work in concert to generate RNA folding, modifications, rearrangements and cleavage as well as targeted degradation of pre-ribosomal RNA by the RNA exosome. May play a role during erythropoiesis. The sequence is that of Small ribosomal subunit protein eS1 from Taeniopygia guttata (Zebra finch).